Reading from the N-terminus, the 156-residue chain is Small ribosomal subunit protein uS7c (156 aa).

Belongs to the universal ribosomal protein uS7 family. Part of the 30S ribosomal subunit.

The protein localises to the plastid. Its subcellular location is the chloroplast. In terms of biological role, one of the primary rRNA binding proteins, it binds directly to 16S rRNA where it nucleates assembly of the head domain of the 30S subunit. The sequence is that of Small ribosomal subunit protein uS7c (rps7) from Nephroselmis olivacea (Green alga).